The sequence spans 506 residues: Epstein-Barr nuclear antigen leader protein (506 aa).

Disordered regions lie at residues 1-470 and 485-506; these read MGDR…PRPP and FEPP…EDED. S35 is subject to Phosphoserine; by host.

It belongs to the lymphocryptovirus EBNA-LP family. As to quaternary structure, homooligomer. Interacts with host SP100; this interaction is important for EBNA-LP coactivator activity. Interacts with host HAX1, ERR1 and HSPA2. Interacts with host PRKDC and AKAP8L; these interactions modulate the coactivator function of EBNA-LP. Phosphorylated by the cellular protein kinase cdc2.

The protein resides in the host nucleus. Functionally, plays an important role in the establishment of B-cell immortalization by acting as an EBNA2 coactivator. This transcriptional activation preferentially enhances the expression of the major viral protein LMP1. The interaction between EBNA-LP and host SP100 correlates with coactivation of EBNA2 and the relocalization of SP100 from PML nuclear bodies into nucleoplasm. The protein is Epstein-Barr nuclear antigen leader protein (EBNA-LP) of Epstein-Barr virus (strain B95-8) (HHV-4).